Reading from the N-terminus, the 139-residue chain is Transcription antitermination protein NusB (139 aa).

This sequence belongs to the NusB family.

Involved in transcription antitermination. Required for transcription of ribosomal RNA (rRNA) genes. Binds specifically to the boxA antiterminator sequence of the ribosomal RNA (rrn) operons. This Erwinia tasmaniensis (strain DSM 17950 / CFBP 7177 / CIP 109463 / NCPPB 4357 / Et1/99) protein is Transcription antitermination protein NusB.